A 609-amino-acid polypeptide reads, in one-letter code: Dynamin-like protein 2 (609 aa).

Positions 1-16 are inserts into assembly domain of DLP1, required for tetramerization; it reads MQINLLNDFIKAYENT. The segment at 17-25 is linker; that stretch reads YSVSFDDSF. One can recognise a Dynamin-type G domain in the interval 63–310; the sequence is NIAIIGQFSS…FVGIFDRLLN (248 aa). The interval 68–75 is G1 motif; the sequence is GQFSSGKS. 72–76 is a GDP binding site; the sequence is SGKSS. The segment at 93–95 is G2 motif; sequence PVT. The segment at 158–161 is G3 motif; sequence DTPG. The tract at residues 216 to 219 is G4 motif; sequence NQKD.

This sequence belongs to the TRAFAC class dynamin-like GTPase superfamily. Dynamin/Fzo/YdjA family. In terms of assembly, forms a 2:2 heterotetramer with DLP1. DLP2 forms a central back-to-back dimer flanked on each side by a DLP1 subunit. In the crystal structures the 2 DLP1 subunits are in very different conformations.

The protein resides in the cytoplasm. It is found in the cytosol. It carries out the reaction GTP + H2O = GDP + phosphate + H(+). The heterotetrameric DLP1(2)-DLP2(2) complex tethers liposomes and may mediate their fusion. Initial binding is probably mediated by DLP1, while DLP2 couples DLP1 subunits and increases the effective reach of the complex up to 45 nm. The role of the nucleotide is unknown. This subunit alone very weakly binds to liposomes; GTP, GDP, GMPPCP and GMPPNP do not change heterotetramer binding. Tetramerization is required for GTPase activity, suggesting the GTPase domains (dynamin-type G) from DLP1 and DLP2 must dimerize to reconstitute the GTPase active site. This chain is Dynamin-like protein 2, found in Campylobacter jejuni subsp. jejuni serotype O:23/36 (strain 81-176).